A 341-amino-acid chain; its full sequence is tRNA N6-adenosine threonylcarbamoyltransferase (341 aa).

2 residues coordinate Fe cation: histidine 111 and histidine 115. Residues 133-137, aspartate 166, glycine 179, aspartate 183, and asparagine 273 contribute to the substrate site; that span reads AVSGG. Aspartate 301 serves as a coordination point for Fe cation.

It belongs to the KAE1 / TsaD family. It depends on Fe(2+) as a cofactor.

Its subcellular location is the cytoplasm. It carries out the reaction L-threonylcarbamoyladenylate + adenosine(37) in tRNA = N(6)-L-threonylcarbamoyladenosine(37) in tRNA + AMP + H(+). Its function is as follows. Required for the formation of a threonylcarbamoyl group on adenosine at position 37 (t(6)A37) in tRNAs that read codons beginning with adenine. Is involved in the transfer of the threonylcarbamoyl moiety of threonylcarbamoyl-AMP (TC-AMP) to the N6 group of A37, together with TsaE and TsaB. TsaD likely plays a direct catalytic role in this reaction. The sequence is that of tRNA N6-adenosine threonylcarbamoyltransferase from Geobacter metallireducens (strain ATCC 53774 / DSM 7210 / GS-15).